Here is a 225-residue protein sequence, read N- to C-terminus: Uracil-DNA glycosylase (225 aa).

Catalysis depends on Asp65, which acts as the Proton acceptor.

The protein belongs to the uracil-DNA glycosylase (UDG) superfamily. UNG family.

It localises to the cytoplasm. The enzyme catalyses Hydrolyzes single-stranded DNA or mismatched double-stranded DNA and polynucleotides, releasing free uracil.. Functionally, excises uracil residues from the DNA which can arise as a result of misincorporation of dUMP residues by DNA polymerase or due to deamination of cytosine. This chain is Uracil-DNA glycosylase, found in Clostridium botulinum (strain Alaska E43 / Type E3).